Consider the following 57-residue polypeptide: UPF0509 protein YciZ (57 aa).

The protein belongs to the UPF0509 family.

The sequence is that of UPF0509 protein YciZ from Escherichia coli O127:H6 (strain E2348/69 / EPEC).